Here is a 155-residue protein sequence, read N- to C-terminus: Small ribosomal subunit protein uS7cz/uS7cy (155 aa).

Belongs to the universal ribosomal protein uS7 family. In terms of assembly, part of the 30S ribosomal subunit.

The protein resides in the plastid. It localises to the chloroplast. In terms of biological role, one of the primary rRNA binding proteins, it binds directly to 16S rRNA where it nucleates assembly of the head domain of the 30S subunit. This is Small ribosomal subunit protein uS7cz/uS7cy (rps7-A) from Populus trichocarpa (Western balsam poplar).